The chain runs to 201 residues: Alpha-1-acid glycoprotein (201 aa).

Residues M1–A18 form the signal peptide. 6 N-linked (GlcNAc...) asparagine glycosylation sites follow: N25, N33, N87, N93, N103, and N169. A disulfide bridge links C90 with C183.

It belongs to the calycin superfamily. Lipocalin family.

Its subcellular location is the secreted. In terms of biological role, functions as a transport protein in the blood stream. Binds various ligands in the interior of its beta-barrel domain. Appears to function in modulating the activity of the immune system during the acute-phase reaction. The sequence is that of Alpha-1-acid glycoprotein (ORM1) from Oryctolagus cuniculus (Rabbit).